Here is a 178-residue protein sequence, read N- to C-terminus: Large ribosomal subunit protein bL25 (178 aa).

This sequence belongs to the bacterial ribosomal protein bL25 family. CTC subfamily. As to quaternary structure, part of the 50S ribosomal subunit; part of the 5S rRNA/L5/L18/L25 subcomplex. Contacts the 5S rRNA. Binds to the 5S rRNA independently of L5 and L18.

Its function is as follows. This is one of the proteins that binds to the 5S RNA in the ribosome where it forms part of the central protuberance. The chain is Large ribosomal subunit protein bL25 from Campylobacter hominis (strain ATCC BAA-381 / DSM 21671 / CCUG 45161 / LMG 19568 / NCTC 13146 / CH001A).